A 325-amino-acid chain; its full sequence is ATP synthase gamma chain (325 aa).

It belongs to the ATPase gamma chain family. In terms of assembly, F-type ATPases have 2 components, CF(1) - the catalytic core - and CF(0) - the membrane proton channel. CF(1) has five subunits: alpha(3), beta(3), gamma(1), delta(1), epsilon(1). CF(0) has three main subunits: a, b and c.

It localises to the cell membrane. In terms of biological role, produces ATP from ADP in the presence of a proton gradient across the membrane. The gamma chain is believed to be important in regulating ATPase activity and the flow of protons through the CF(0) complex. In Corynebacterium diphtheriae (strain ATCC 700971 / NCTC 13129 / Biotype gravis), this protein is ATP synthase gamma chain.